The chain runs to 434 residues: Na(+)/H(+) antiporter NhaA 1 (434 aa).

10 helical membrane passes run 30–50 (TGGL…NVAG), 70–90 (LSIE…VTGL), 108–128 (ALPI…FVLV), 141–161 (VGWA…LAVV), 172–192 (FLLT…AIFY), 195–215 (QVHW…TVAV), 286–306 (FAVP…VSGF), 318–338 (VIAG…WLLA), 354–374 (VLGM…IGSL), and 386–406 (VTLG…VVLS).

Belongs to the NhaA Na(+)/H(+) (TC 2.A.33) antiporter family.

Its subcellular location is the cell membrane. It catalyses the reaction Na(+)(in) + 2 H(+)(out) = Na(+)(out) + 2 H(+)(in). Functionally, na(+)/H(+) antiporter that extrudes sodium in exchange for external protons. This is Na(+)/H(+) antiporter NhaA 1 from Kineococcus radiotolerans (strain ATCC BAA-149 / DSM 14245 / SRS30216).